A 52-amino-acid chain; its full sequence is MAVPKKSTSISKKRIRKNIWKKKVYRAALKAFSLAKSLSTGNSKSFFCTTIK.

Belongs to the bacterial ribosomal protein bL32 family.

It localises to the plastid. The protein resides in the chloroplast. The chain is Large ribosomal subunit protein bL32c from Eucalyptus globulus subsp. globulus (Tasmanian blue gum).